Consider the following 375-residue polypeptide: Tryptophan--tRNA ligase (375 aa).

A 'HIGH' region motif is present at residues 81-89 (PSGPVHIGH). The 'KMSKS' region motif lies at 258-262 (KMSAS).

It belongs to the class-I aminoacyl-tRNA synthetase family.

The protein localises to the cytoplasm. The enzyme catalyses tRNA(Trp) + L-tryptophan + ATP = L-tryptophyl-tRNA(Trp) + AMP + diphosphate + H(+). This Pyrobaculum aerophilum (strain ATCC 51768 / DSM 7523 / JCM 9630 / CIP 104966 / NBRC 100827 / IM2) protein is Tryptophan--tRNA ligase.